We begin with the raw amino-acid sequence, 103 residues long: Large ribosomal subunit protein bL21 (103 aa).

This sequence belongs to the bacterial ribosomal protein bL21 family. As to quaternary structure, part of the 50S ribosomal subunit. Contacts protein L20.

In terms of biological role, this protein binds to 23S rRNA in the presence of protein L20. In Shewanella woodyi (strain ATCC 51908 / MS32), this protein is Large ribosomal subunit protein bL21.